The chain runs to 172 residues: MEYFNVGKIVNTQGLQGEMRVLSVSDFAEERFKKGSQLALFDDKDQFVQEVTIVSHRKQKNFDIIKFKDMYHINAIEKYKGYTLKVSKANQGDLQEGEFYYHQIIGMPVYEKDRLIGYVKEILQPGANDVWVVKRQGKRDLLLPYIPPVVLNVDVPNKCVDVELMEGLDDED.

One can recognise a PRC barrel domain in the interval 95-168 (QEGEFYYHQI…CVDVELMEGL (74 aa)).

The protein belongs to the RimM family. As to quaternary structure, binds ribosomal protein uS19.

It is found in the cytoplasm. In terms of biological role, an accessory protein needed during the final step in the assembly of 30S ribosomal subunit, possibly for assembly of the head region. Essential for efficient processing of 16S rRNA. May be needed both before and after RbfA during the maturation of 16S rRNA. It has affinity for free ribosomal 30S subunits but not for 70S ribosomes. The chain is Ribosome maturation factor RimM from Streptococcus pyogenes serotype M49 (strain NZ131).